Consider the following 356-residue polypeptide: tRNA (guanine(26)-N(2))-dimethyltransferase (356 aa).

A Trm1 methyltransferase domain is found at 5 to 352; that stretch reads VLRREGTVEF…VSAGEVERVL (348 aa). The S-adenosyl-L-methionine site is built by Arg-40, Arg-67, Asp-85, Asp-111, and Ala-112.

It belongs to the class I-like SAM-binding methyltransferase superfamily. Trm1 family.

It catalyses the reaction guanosine(26) in tRNA + 2 S-adenosyl-L-methionine = N(2)-dimethylguanosine(26) in tRNA + 2 S-adenosyl-L-homocysteine + 2 H(+). Dimethylates a single guanine residue at position 26 of a number of tRNAs using S-adenosyl-L-methionine as donor of the methyl groups. The chain is tRNA (guanine(26)-N(2))-dimethyltransferase from Pyrobaculum arsenaticum (strain DSM 13514 / JCM 11321 / PZ6).